We begin with the raw amino-acid sequence, 245 residues long: 4-hydroxy-tetrahydrodipicolinate reductase (245 aa).

Residues 7–12 (GARGKV), 75–77 (GTT), and 102–105 (APNF) contribute to the NAD(+) site. The Proton donor/acceptor role is filled by His132. Residue His133 participates in (S)-2,3,4,5-tetrahydrodipicolinate binding. Lys136 functions as the Proton donor in the catalytic mechanism. 142–143 (GT) contacts (S)-2,3,4,5-tetrahydrodipicolinate.

The protein belongs to the DapB family.

It localises to the cytoplasm. It catalyses the reaction (S)-2,3,4,5-tetrahydrodipicolinate + NAD(+) + H2O = (2S,4S)-4-hydroxy-2,3,4,5-tetrahydrodipicolinate + NADH + H(+). It carries out the reaction (S)-2,3,4,5-tetrahydrodipicolinate + NADP(+) + H2O = (2S,4S)-4-hydroxy-2,3,4,5-tetrahydrodipicolinate + NADPH + H(+). Its pathway is amino-acid biosynthesis; L-lysine biosynthesis via DAP pathway; (S)-tetrahydrodipicolinate from L-aspartate: step 4/4. Its function is as follows. Catalyzes the conversion of 4-hydroxy-tetrahydrodipicolinate (HTPA) to tetrahydrodipicolinate. This Mycolicibacterium vanbaalenii (strain DSM 7251 / JCM 13017 / BCRC 16820 / KCTC 9966 / NRRL B-24157 / PYR-1) (Mycobacterium vanbaalenii) protein is 4-hydroxy-tetrahydrodipicolinate reductase.